Here is a 726-residue protein sequence, read N- to C-terminus: Catalase-peroxidase (726 aa).

Positions 1 to 33 (MSTSDDIHNTTATGKCPFHQGGHDQSAGAGTTT) are disordered. Residues 105–226 (WHGAGTYRSI…LGATEMGLIY (122 aa)) constitute a cross-link (tryptophyl-tyrosyl-methioninium (Trp-Tyr) (with M-252)). H106 (proton acceptor) is an active-site residue. A cross-link (tryptophyl-tyrosyl-methioninium (Tyr-Met) (with W-105)) is located at residues 226–252 (YVNPEGPDHSGEPLSAAAAIRATFGNM). Position 267 (H267) interacts with heme b.

The protein belongs to the peroxidase family. Peroxidase/catalase subfamily. In terms of assembly, homodimer or homotetramer. Heme b is required as a cofactor. Post-translationally, formation of the three residue Trp-Tyr-Met cross-link is important for the catalase, but not the peroxidase activity of the enzyme.

It carries out the reaction H2O2 + AH2 = A + 2 H2O. The enzyme catalyses 2 H2O2 = O2 + 2 H2O. Functionally, bifunctional enzyme with both catalase and broad-spectrum peroxidase activity. This chain is Catalase-peroxidase, found in Escherichia coli (strain K12 / DH10B).